The sequence spans 833 residues: MTRSPFRRLVFGTLRRLLYLWVRSETINQSSFTLNLDRSRPVFYALQSPSISDLAVIDTECRKAGLPRPVLSVAVGNLIEPAAFFYLTPAPDWLGRQDKRGAPPTLERLVAAVSQNPGEDAQIIPVSVFWGQSPDRESSAWKLLFADSWAVTGRLRRLVSILILGRKTRVQFSAPIHMRELVGENKGYELTLRMTQRLLRVHFRNLKSAVIGPDVSHRRTVVKGLLDEPLVKQAIIEEAERENITQDKARDRALSYGNEIASDYTYSVIRFMEVVLSWFWNKIYDGIKVSHIEGVQEVAPGHEVIYVPCHRSHIDYLLLSYLLFCNGLTPPHIAAGINLNMPVVGSLLRRGGAFFMRRTFKGNPLYTAVFTEYLHTLFIKGFPVEYFVEGGRSRTGRMLQPKTGMLAITLRSFLRNSRMPIVFVPLYIGYERVLEGRTYLGELRGATKKKESIFDIFKVIGALKQRFGQVSVNFGAPIKLAEFLDGEQPDWREQALAPQFRPEWLSETTHRLGERVAQHLNEAAAVNPMNLVAVALLSTQRLALDDQAMERVLDLYLTLLRAVPYSPHTTLPEGDGRSLIEHVKGMDLLAEQKDALGKILYLNEQNAVLMTYYRNNVLHIFALPSLLASFFQSSSRMSREQILRYTRALYPFLQSELFIRWPLSELDEVVDQWLAAFVEQGLLRFKKDVYVRPEPSSREFVLLTLLSRAIAQTLQRFYMAIALLLNSGQNTLSAEQLEDLCTVMAQRLSILHGLNAPEFFDKSLFRHFIQTLLDLGVLRKDSAGKLSYHPMLGELAEGAAKRVLPAEIRLSIRQVALHSNEEEQDAGNGEGVA.

An HXXXXD motif motif is present at residues 309-314 (CHRSHI).

This sequence belongs to the GPAT/DAPAT family.

The protein localises to the cell inner membrane. The catalysed reaction is sn-glycerol 3-phosphate + an acyl-CoA = a 1-acyl-sn-glycero-3-phosphate + CoA. It participates in phospholipid metabolism; CDP-diacylglycerol biosynthesis; CDP-diacylglycerol from sn-glycerol 3-phosphate: step 1/3. The chain is Glycerol-3-phosphate acyltransferase from Pseudomonas savastanoi pv. phaseolicola (strain 1448A / Race 6) (Pseudomonas syringae pv. phaseolicola (strain 1448A / Race 6)).